The following is a 515-amino-acid chain: Bifunctional purine biosynthesis protein PurH (515 aa).

Residues 1–145 enclose the MGS-like domain; that stretch reads MTKRALISVS…KNHASVTVVV (145 aa).

Belongs to the PurH family.

It catalyses the reaction (6R)-10-formyltetrahydrofolate + 5-amino-1-(5-phospho-beta-D-ribosyl)imidazole-4-carboxamide = 5-formamido-1-(5-phospho-D-ribosyl)imidazole-4-carboxamide + (6S)-5,6,7,8-tetrahydrofolate. It carries out the reaction IMP + H2O = 5-formamido-1-(5-phospho-D-ribosyl)imidazole-4-carboxamide. Its pathway is purine metabolism; IMP biosynthesis via de novo pathway; 5-formamido-1-(5-phospho-D-ribosyl)imidazole-4-carboxamide from 5-amino-1-(5-phospho-D-ribosyl)imidazole-4-carboxamide (10-formyl THF route): step 1/1. It participates in purine metabolism; IMP biosynthesis via de novo pathway; IMP from 5-formamido-1-(5-phospho-D-ribosyl)imidazole-4-carboxamide: step 1/1. The chain is Bifunctional purine biosynthesis protein PurH from Streptococcus suis.